The sequence spans 68 residues: Large ribosomal subunit protein bL33c (68 aa).

This sequence belongs to the bacterial ribosomal protein bL33 family.

The protein resides in the plastid. The protein is Large ribosomal subunit protein bL33c of Cuscuta reflexa (Southern Asian dodder).